The primary structure comprises 231 residues: Putative Nudix hydrolase FPV054 (231 aa).

The 144-residue stretch at 74 to 217 (SKRRSFSEIL…SNEKYEYLHF (144 aa)) folds into the Nudix hydrolase domain. Residues 125–146 (GRVKNKESIYQCLSRELSEESD) carry the Nudix box motif. Residue Glu131 participates in Mg(2+) binding. The active-site Nucleophile is the Glu140. The Mg(2+) site is built by Glu144 and Asp165.

Belongs to the Nudix hydrolase family. Mg(2+) is required as a cofactor. Mn(2+) serves as cofactor.

Decapping enzyme required for the removal of the 5'-end m7GpppN cap tethered to viral and host mRNAs to allow their decay in cells. May therefore accelerate viral and cellular mRNA turnover to eliminate competing host mRNAs and allow stage-specific synthesis of viral proteins. Acceleration of the turnover of cellular transcripts may even promote the shutoff of host protein synthesis. Does not cleave unmethylated RNAs or RNAs shorter than 24 nucleotides. The polypeptide is Putative Nudix hydrolase FPV054 (Vertebrata (FPV)).